Here is a 182-residue protein sequence, read N- to C-terminus: Pyruvoyl-dependent arginine decarboxylase (182 aa).

Residue Ser-44 is modified to Pyruvic acid (Ser).

The protein belongs to the PdaD family. Pyruvate serves as cofactor.

The enzyme catalyses L-arginine + H(+) = agmatine + CO2. The chain is Pyruvoyl-dependent arginine decarboxylase from Picrophilus torridus (strain ATCC 700027 / DSM 9790 / JCM 10055 / NBRC 100828 / KAW 2/3).